We begin with the raw amino-acid sequence, 223 residues long: Ribose-5-phosphate isomerase A (223 aa).

Substrate is bound by residues 29–32 (TGST), 82–85 (DGAD), and 95–98 (KGGG). Glu104 functions as the Proton acceptor in the catalytic mechanism. Lys122 serves as a coordination point for substrate.

It belongs to the ribose 5-phosphate isomerase family. As to quaternary structure, homodimer.

The enzyme catalyses aldehydo-D-ribose 5-phosphate = D-ribulose 5-phosphate. It functions in the pathway carbohydrate degradation; pentose phosphate pathway; D-ribose 5-phosphate from D-ribulose 5-phosphate (non-oxidative stage): step 1/1. Its function is as follows. Catalyzes the reversible conversion of ribose-5-phosphate to ribulose 5-phosphate. The polypeptide is Ribose-5-phosphate isomerase A (Neisseria meningitidis serogroup B (strain ATCC BAA-335 / MC58)).